We begin with the raw amino-acid sequence, 177 residues long: Eggshell protein (177 aa).

A signal peptide spans 1–18 (MKQSLTLVFLVAIGYATA). Repeat copies occupy residues 25-41 (YSGG…CDSG), 42-59 (YGDS…CGGG), 60-75 (YGGG…DCGN), 76-91 (YGGG…DCGN), and 92-112 (YGGG…CGGG). The interval 25–112 (YSGGYGGGCY…GCSGGNCGGG (88 aa)) is 5 X approximate tandem repeats. Residues 149 to 166 (GSGKGKGGGKGGKGGKGG) show a composition bias toward gly residues. The interval 149-177 (GSGKGKGGGKGGKGGKGGTYKPSHYGGGY) is disordered.

The sequence is that of Eggshell protein from Schistosoma mansoni (Blood fluke).